Consider the following 356-residue polypeptide: Terpene synthase 10 (356 aa).

The short motif at 90–95 is the DDxx(x)D/E motif element; sequence DDYLDS. The NDxxSxxxD/E motif signature appears at 232 to 240; sequence NDAVSYAKE.

Belongs to the terpene synthase family.

The enzyme catalyses geranylgeranyl diphosphate = beta-araneosene + diphosphate. Terpene synthase that converts its substrate farnesyl diphosphate (FPP) into several unidentified sesquiterpenes. TPS10 also converts geranylgeranyl diphosphate (GGPP) into the diterpene beta-araneosene. In Dictyostelium purpureum (Slime mold), this protein is Terpene synthase 10.